Consider the following 382-residue polypeptide: Bifunctional enzyme IspD/IspF (382 aa).

Residues 1-226 (MTLAVLIVAA…RSTMDNIPDI (226 aa)) form a 2-C-methyl-D-erythritol 4-phosphate cytidylyltransferase region. The segment at 227–382 (RLGNGYDVHR…ALATATLVRA (156 aa)) is 2-C-methyl-D-erythritol 2,4-cyclodiphosphate synthase. Residues D233 and H235 each contribute to the a divalent metal cation site. Residues 233–235 (DVH) and 259–260 (HS) contribute to the 4-CDP-2-C-methyl-D-erythritol 2-phosphate site. Residue H267 participates in a divalent metal cation binding. Residues 281 to 283 (DIG), 357 to 360 (TTSE), F364, and R367 contribute to the 4-CDP-2-C-methyl-D-erythritol 2-phosphate site.

The protein in the N-terminal section; belongs to the IspD/TarI cytidylyltransferase family. IspD subfamily. This sequence in the C-terminal section; belongs to the IspF family. The cofactor is a divalent metal cation.

It carries out the reaction 2-C-methyl-D-erythritol 4-phosphate + CTP + H(+) = 4-CDP-2-C-methyl-D-erythritol + diphosphate. The enzyme catalyses 4-CDP-2-C-methyl-D-erythritol 2-phosphate = 2-C-methyl-D-erythritol 2,4-cyclic diphosphate + CMP. Its pathway is isoprenoid biosynthesis; isopentenyl diphosphate biosynthesis via DXP pathway; isopentenyl diphosphate from 1-deoxy-D-xylulose 5-phosphate: step 2/6. It functions in the pathway isoprenoid biosynthesis; isopentenyl diphosphate biosynthesis via DXP pathway; isopentenyl diphosphate from 1-deoxy-D-xylulose 5-phosphate: step 4/6. Bifunctional enzyme that catalyzes the formation of 4-diphosphocytidyl-2-C-methyl-D-erythritol from CTP and 2-C-methyl-D-erythritol 4-phosphate (MEP) (IspD), and catalyzes the conversion of 4-diphosphocytidyl-2-C-methyl-D-erythritol 2-phosphate (CDP-ME2P) to 2-C-methyl-D-erythritol 2,4-cyclodiphosphate (ME-CPP) with a corresponding release of cytidine 5-monophosphate (CMP) (IspF). The chain is Bifunctional enzyme IspD/IspF from Ruegeria sp. (strain TM1040) (Silicibacter sp.).